Consider the following 372-residue polypeptide: Oxoglutarate-dependent flavonoid 7-O-demethylase 1 (372 aa).

The 101-residue stretch at 221-321 (GIQALRMNYY…RLSVAAFLNP (101 aa)) folds into the Fe2OG dioxygenase domain. Positions 245, 247, and 302 each coordinate Fe cation. Arginine 312 provides a ligand contact to 2-oxoglutarate.

Belongs to the iron/ascorbate-dependent oxidoreductase family. Monomer. Fe(2+) is required as a cofactor. The cofactor is L-ascorbate. Accumulates in the trichomes of nevadensin-accumulating strains (e.g. cv. SD and cv. EMX-1) and in cv. SW (at protein level) but not in cv. MC.

It localises to the cytoplasm. It carries out the reaction gardenin B + 2-oxoglutarate + O2 = nevadensin + formaldehyde + succinate + CO2 + H(+). The enzyme catalyses 8-hydroxysalvigenin + 2-oxoglutarate + O2 = pilosin + formaldehyde + succinate + CO2. It functions in the pathway flavonoid metabolism. With respect to regulation, inhibited by prohexadione-calcium, a 2-oxoglutarate-dependent dioxygenase (2-ODD) inhibitor, thus leading to a decreased abundance of nevadensin (NEV) and absence of pilosin (PIL) production, but to the accumulation of gardenin B (GARD B) and 8-hydroxysalvigenin (8-OH-SALV). In terms of biological role, oxoglutarate-dependent dioxygenase (2-ODD) acting as a flavonoid 7-O-demethylase involved in the biosynthesis of polymethoxylated flavonoids natural products such as nevadensin and salvigenin, aroma compounds which contribute to the flavor of sweet basil, and exhibit pharmacological activities such as anti-allergic, anti-oxidant, antibacterial, anti-proliferative, and anti-inflammatory effects. Catalyzes the 7-O-demethylation of methoxylated flavones; mediates the conversion of 8-hydroxysalvigenin (8-OH-SALV) to pilosin (PIL) and of gardenin B (GARD B) to nevadensin (NEV). The polypeptide is Oxoglutarate-dependent flavonoid 7-O-demethylase 1 (Ocimum basilicum (Sweet basil)).